Consider the following 678-residue polypeptide: Vitrin (678 aa).

The N-terminal stretch at 1-26 is a signal peptide; that stretch reads MRTVVLTMKASVIEMFLVLLVTGVHS. Residues 40–133 enclose the LCCL domain; sequence TVPQINCDVK…LSLPRWRESF (94 aa). Disulfide bonds link Cys46/Cys62 and Cys66/Cys86. Positions 154 to 168 are enriched in polar residues; that stretch reads SSKSPAAQAGETTKA. Disordered regions lie at residues 154–177 and 199–257; these read SSKS…IPGT and TLPR…GAAF. Positions 199-216 are enriched in low complexity; the sequence is TLPRPSPSAASTTSIPRP. Residues 230-240 are compositionally biased toward polar residues; the sequence is STATYTSSQNR. VWFA domains lie at 293–478 and 495–668; these read DLSF…VKRV and DIGF…IQNI. N-linked (GlcNAc...) asparagine glycans are attached at residues Asn390 and Asn520.

As to quaternary structure, binds dermatan sulfate and chondroitin sulfate.

The protein localises to the secreted. The protein resides in the extracellular space. It is found in the extracellular matrix. In terms of biological role, promotes matrix assembly and cell adhesiveness. Plays a role in spinal cord formation by regulating the proliferation and differentiation of neural stem cells. This chain is Vitrin (VIT), found in Homo sapiens (Human).